The chain runs to 115 residues: Large ribosomal subunit protein bL19 (115 aa).

This sequence belongs to the bacterial ribosomal protein bL19 family.

In terms of biological role, this protein is located at the 30S-50S ribosomal subunit interface and may play a role in the structure and function of the aminoacyl-tRNA binding site. In Clostridium kluyveri (strain ATCC 8527 / DSM 555 / NBRC 12016 / NCIMB 10680 / K1), this protein is Large ribosomal subunit protein bL19.